Consider the following 360-residue polypeptide: S-adenosylmethionine:tRNA ribosyltransferase-isomerase (360 aa).

It belongs to the QueA family. In terms of assembly, monomer.

The protein resides in the cytoplasm. It catalyses the reaction 7-aminomethyl-7-carbaguanosine(34) in tRNA + S-adenosyl-L-methionine = epoxyqueuosine(34) in tRNA + adenine + L-methionine + 2 H(+). Its pathway is tRNA modification; tRNA-queuosine biosynthesis. Functionally, transfers and isomerizes the ribose moiety from AdoMet to the 7-aminomethyl group of 7-deazaguanine (preQ1-tRNA) to give epoxyqueuosine (oQ-tRNA). The protein is S-adenosylmethionine:tRNA ribosyltransferase-isomerase of Rhizobium rhizogenes (strain K84 / ATCC BAA-868) (Agrobacterium radiobacter).